A 773-amino-acid chain; its full sequence is Lon protease homolog 2, peroxisomal (773 aa).

A Lon N-terminal domain is found at 9–198; sequence LPVIVVDSGV…MCEKWMQMQR (190 aa). Residue 336–343 coordinates ATP; sequence GPPGIGKT. In terms of domain architecture, Lon proteolytic spans 587–766; sequence PLPPGVCFGL…EDVIEAMMEK (180 aa). Residues Ser672 and Lys715 contribute to the active site. The short motif at 771 to 773 is the Microbody targeting signal element; that stretch reads AKL.

This sequence belongs to the peptidase S16 family.

Its subcellular location is the peroxisome matrix. It catalyses the reaction Hydrolysis of proteins in presence of ATP.. Functionally, ATP-dependent serine protease that mediates the selective degradation of misfolded and unassembled polypeptides in the peroxisomal matrix. Necessary for type 2 peroxisome targeting signal (PTS2)-containing protein processing and facilitates peroxisome matrix protein import. The sequence is that of Lon protease homolog 2, peroxisomal from Caenorhabditis briggsae.